Reading from the N-terminus, the 201-residue chain is Thymidylate kinase (201 aa).

7-14 is a binding site for ATP; sequence GGEGSGKT.

It belongs to the thymidylate kinase family.

It catalyses the reaction dTMP + ATP = dTDP + ADP. Its function is as follows. Phosphorylation of dTMP to form dTDP in both de novo and salvage pathways of dTTP synthesis. This is Thymidylate kinase from Acholeplasma laidlawii (strain PG-8A).